A 318-amino-acid polypeptide reads, in one-letter code: Deoxyhypusine hydroxylase (318 aa).

Fe cation-binding residues include His65, Glu66, His98, and Glu99. HEAT-like PBS-type repeat units follow at residues 96-122, 194-220, 225-251, and 258-284; these read VRHE…YYKE, YRYR…GFKD, FRHE…VLEN, and VRHE…FSKD. Positions 227, 228, 260, and 261 each coordinate Fe cation.

The protein belongs to the deoxyhypusine hydroxylase family. It depends on Fe(2+) as a cofactor.

It localises to the cytoplasm. The protein localises to the nucleus. It catalyses the reaction [eIF5A protein]-deoxyhypusine + AH2 + O2 = [eIF5A protein]-hypusine + A + H2O. It functions in the pathway protein modification; eIF5A hypusination. Functionally, catalyzes the hydroxylation of the N(6)-(4-aminobutyl)-L-lysine intermediate to form hypusine, an essential post-translational modification only found in mature eIF-5A factor. This is Deoxyhypusine hydroxylase (lia1) from Schizosaccharomyces pombe (strain 972 / ATCC 24843) (Fission yeast).